Reading from the N-terminus, the 199-residue chain is Transgelin-2 (199 aa).

Position 2 is an N-acetylalanine (alanine 2). Serine 11 is subject to Phosphoserine. An N6-acetyllysine mark is found at lysine 17 and lysine 20. Residues 24–136 (ADLEQILIQW…RTLMNLGGLA (113 aa)) enclose the Calponin-homology (CH) domain. Serine 163 bears the Phosphoserine mark. Lysine 171 participates in a covalent cross-link: Glycyl lysine isopeptide (Lys-Gly) (interchain with G-Cter in SUMO2). The Calponin-like repeat unit spans residues 174-199 (IGLQMGTNRGASQAGMTGYGMPRQIL). Threonine 180 bears the Phosphothreonine mark. 2 positions are modified to omega-N-methylarginine: arginine 182 and arginine 196.

It belongs to the calponin family.

This chain is Transgelin-2 (Tagln2), found in Mus musculus (Mouse).